The chain runs to 404 residues: Sialidase (404 aa).

A signal peptide spans 1 to 27 (MKKFIKILKVLSMAIVLSACNINGIFA). R55 lines the substrate pocket. The active-site Proton acceptor is the D80. BNR repeat units follow at residues 89-100 (AKSTDNGQTWDY), 158-169 (VYSDDNGETWSD), and 226-237 (IYSKDNGETWTM). R263 is a substrate binding site. Residues 273 to 284 (YISYDMGSTWEV) form a BNR 4 repeat. Residue Y365 is the Nucleophile of the active site.

This sequence belongs to the glycosyl hydrolase 33 family. It is possible that the sialidase is cleaved in front of a cysteine within the leader peptide, forming a glyceride thioether bond which links the protein to the membrane. A second proteolytic cleavage releases the mature extracellular protein.

The protein resides in the secreted. The catalysed reaction is Hydrolysis of alpha-(2-&gt;3)-, alpha-(2-&gt;6)-, alpha-(2-&gt;8)- glycosidic linkages of terminal sialic acid residues in oligosaccharides, glycoproteins, glycolipids, colominic acid and synthetic substrates.. In terms of biological role, sialidases have been suggested to be pathogenic factors in microbial infections. This Paraclostridium sordellii (Clostridium sordellii) protein is Sialidase.